The chain runs to 115 residues: U3-lycotoxin-Ls1a (115 aa).

The signal sequence occupies residues 1–20; that stretch reads MKFVLLFGVLLVTLFSYSSA. Residues 21–44 constitute a propeptide that is removed on maturation; it reads EMLDDFDQADEDELLSSIEKEEAR. Intrachain disulfides connect cysteine 48/cysteine 63, cysteine 55/cysteine 72, cysteine 62/cysteine 87, and cysteine 74/cysteine 85.

It belongs to the neurotoxin 19 (CSTX) family. 01 subfamily. As to expression, expressed by the venom gland.

It localises to the secreted. In Lycosa singoriensis (Wolf spider), this protein is U3-lycotoxin-Ls1a.